Here is a 278-residue protein sequence, read N- to C-terminus: Phosphatidylglycerol--prolipoprotein diacylglyceryl transferase (278 aa).

Transmembrane regions (helical) follow at residues 21–41 (WYGIIIAAGILLGYFIAQASV), 54–74 (IIFWSAIFGFIVARIYFVIFQ), and 88–108 (IWHGGIAIHGGLIGGFVTGII). Position 136 (R136) interacts with a 1,2-diacyl-sn-glycero-3-phospho-(1'-sn-glycerol). Helical transmembrane passes span 176–196 (QPTFLYESLWDILGFVILILL) and 234–254 (IRVAQLMSIILILIGVIIMII).

It belongs to the Lgt family.

The protein resides in the cell membrane. It carries out the reaction L-cysteinyl-[prolipoprotein] + a 1,2-diacyl-sn-glycero-3-phospho-(1'-sn-glycerol) = an S-1,2-diacyl-sn-glyceryl-L-cysteinyl-[prolipoprotein] + sn-glycerol 1-phosphate + H(+). It participates in protein modification; lipoprotein biosynthesis (diacylglyceryl transfer). Catalyzes the transfer of the diacylglyceryl group from phosphatidylglycerol to the sulfhydryl group of the N-terminal cysteine of a prolipoprotein, the first step in the formation of mature lipoproteins. This is Phosphatidylglycerol--prolipoprotein diacylglyceryl transferase from Staphylococcus xylosus.